Consider the following 367-residue polypeptide: Aminomethyltransferase (367 aa).

This sequence belongs to the GcvT family. In terms of assembly, the glycine cleavage system is composed of four proteins: P, T, L and H.

The catalysed reaction is N(6)-[(R)-S(8)-aminomethyldihydrolipoyl]-L-lysyl-[protein] + (6S)-5,6,7,8-tetrahydrofolate = N(6)-[(R)-dihydrolipoyl]-L-lysyl-[protein] + (6R)-5,10-methylene-5,6,7,8-tetrahydrofolate + NH4(+). The glycine cleavage system catalyzes the degradation of glycine. The chain is Aminomethyltransferase from Shouchella clausii (strain KSM-K16) (Alkalihalobacillus clausii).